We begin with the raw amino-acid sequence, 338 residues long: Glycerol-3-phosphate dehydrogenase [NAD(P)+] (338 aa).

Serine 15, tyrosine 16, histidine 36, and lysine 110 together coordinate NADPH. Sn-glycerol 3-phosphate-binding residues include lysine 110, glycine 139, and threonine 141. NADPH is bound at residue alanine 143. Positions 195, 248, 258, 259, and 260 each coordinate sn-glycerol 3-phosphate. Lysine 195 serves as the catalytic Proton acceptor. Arginine 259 contacts NADPH. The NADPH site is built by valine 283 and glutamate 285.

It belongs to the NAD-dependent glycerol-3-phosphate dehydrogenase family.

It is found in the cytoplasm. It catalyses the reaction sn-glycerol 3-phosphate + NAD(+) = dihydroxyacetone phosphate + NADH + H(+). The enzyme catalyses sn-glycerol 3-phosphate + NADP(+) = dihydroxyacetone phosphate + NADPH + H(+). The protein operates within membrane lipid metabolism; glycerophospholipid metabolism. Functionally, catalyzes the reduction of the glycolytic intermediate dihydroxyacetone phosphate (DHAP) to sn-glycerol 3-phosphate (G3P), the key precursor for phospholipid synthesis. This chain is Glycerol-3-phosphate dehydrogenase [NAD(P)+], found in Edwardsiella ictaluri (strain 93-146).